The chain runs to 131 residues: Translation initiation factor 5A (131 aa).

Position 37 is a hypusine (lysine 37).

This sequence belongs to the eIF-5A family.

The protein resides in the cytoplasm. Its function is as follows. Functions by promoting the formation of the first peptide bond. This is Translation initiation factor 5A (eIF5A) from Methanococcus vannielii (strain ATCC 35089 / DSM 1224 / JCM 13029 / OCM 148 / SB).